Here is a 196-residue protein sequence, read N- to C-terminus: ATP-dependent Clp protease proteolytic subunit (196 aa).

The active-site Nucleophile is serine 101. Histidine 126 is an active-site residue.

This sequence belongs to the peptidase S14 family. In terms of assembly, component of the chloroplastic Clp protease core complex.

The protein localises to the plastid. The protein resides in the chloroplast stroma. It catalyses the reaction Hydrolysis of proteins to small peptides in the presence of ATP and magnesium. alpha-casein is the usual test substrate. In the absence of ATP, only oligopeptides shorter than five residues are hydrolyzed (such as succinyl-Leu-Tyr-|-NHMec, and Leu-Tyr-Leu-|-Tyr-Trp, in which cleavage of the -Tyr-|-Leu- and -Tyr-|-Trp bonds also occurs).. Functionally, cleaves peptides in various proteins in a process that requires ATP hydrolysis. Has a chymotrypsin-like activity. Plays a major role in the degradation of misfolded proteins. This Pinus thunbergii (Japanese black pine) protein is ATP-dependent Clp protease proteolytic subunit.